The chain runs to 180 residues: Pro-glucagon (180 aa).

The N-terminal stretch at 1 to 20 is a signal peptide; that stretch reads MKSIYFVAGLFVMLVQGSWQ. Residues 26–56 are disordered; that stretch reads TEEKSRSFSAPQTEPLNDLDQMNEDKRHSQG. A Phosphoserine modification is found at S54. Positions 84–89 are excised as a propeptide; sequence NKNNIA. 2 positions are modified to phosphoserine: S105 and S108. The residue at position 127 (R127) is an Arginine amide. A propeptide spanning residues 131–145 is cleaved from the precursor; the sequence is DFPEEVAIVEEFRRR. S150 and S152 each carry phosphoserine.

Belongs to the glucagon family. Proglucagon is post-translationally processed in a tissue-specific manner in pancreatic A cells and intestinal L cells. In pancreatic A cells, the major bioactive hormone is glucagon cleaved by PCSK2/PC2. In the intestinal L cells PCSK1/PC1 liberates GLP-1, GLP-2, glicentin and oxyntomodulin. GLP-1 is further N-terminally truncated by post-translational processing in the intestinal L cells resulting in GLP-1(7-37) GLP-1-(7-36)amide. The C-terminal amidation is neither important for the metabolism of GLP-1 nor for its effects on the endocrine pancreas. As to expression, glucagon is secreted in the A cells of the islets of Langerhans. GLP-1, GLP-2, oxyntomodulin and glicentin are secreted from enteroendocrine cells throughout the gastrointestinal tract. GLP-1 and GLP-2 are also secreted in selected neurons in the brain.

The protein resides in the secreted. In terms of biological role, plays a key role in glucose metabolism and homeostasis. Regulates blood glucose by increasing gluconeogenesis and decreasing glycolysis. A counterregulatory hormone of insulin, raises plasma glucose levels in response to insulin-induced hypoglycemia. Plays an important role in initiating and maintaining hyperglycemic conditions in diabetes. Potent stimulator of glucose-dependent insulin release. Also stimulates insulin release in response to IL6. Plays important roles on gastric motility and the suppression of plasma glucagon levels. May be involved in the suppression of satiety and stimulation of glucose disposal in peripheral tissues, independent of the actions of insulin. Has growth-promoting activities on intestinal epithelium. May also regulate the hypothalamic pituitary axis (HPA) via effects on LH, TSH, CRH, oxytocin, and vasopressin secretion. Increases islet mass through stimulation of islet neogenesis and pancreatic beta cell proliferation. Inhibits beta cell apoptosis. Its function is as follows. Stimulates intestinal growth and up-regulates villus height in the small intestine, concomitant with increased crypt cell proliferation and decreased enterocyte apoptosis. The gastrointestinal tract, from the stomach to the colon is the principal target for GLP-2 action. Plays a key role in nutrient homeostasis, enhancing nutrient assimilation through enhanced gastrointestinal function, as well as increasing nutrient disposal. Stimulates intestinal glucose transport and decreases mucosal permeability. Functionally, significantly reduces food intake. Inhibits gastric emptying in humans. Suppression of gastric emptying may lead to increased gastric distension, which may contribute to satiety by causing a sensation of fullness. In terms of biological role, may modulate gastric acid secretion and the gastro-pyloro-duodenal activity. May play an important role in intestinal mucosal growth in the early period of life. The polypeptide is Pro-glucagon (GCG) (Canis lupus familiaris (Dog)).